Consider the following 468-residue polypeptide: Probable citrate synthase, mitochondrial (468 aa).

Catalysis depends on residues H303, H349, and D404.

This sequence belongs to the citrate synthase family. Homodimer.

Its subcellular location is the mitochondrion matrix. The catalysed reaction is oxaloacetate + acetyl-CoA + H2O = citrate + CoA + H(+). Its pathway is carbohydrate metabolism; tricarboxylic acid cycle; isocitrate from oxaloacetate: step 1/2. This is Probable citrate synthase, mitochondrial (cts-1) from Caenorhabditis briggsae.